A 459-amino-acid polypeptide reads, in one-letter code: tRNA modification GTPase MnmE (459 aa).

(6S)-5-formyl-5,6,7,8-tetrahydrofolate-binding residues include R23, E85, and R124. The region spanning 221-380 (GLSTAIIGRP…LEKAIADTFF (160 aa)) is the TrmE-type G domain. K(+) is bound at residue N231. GTP-binding positions include 231–236 (NVGKSS), 250–256 (TEIPGTT), and 275–278 (DTAG). S235 is a binding site for Mg(2+). 3 residues coordinate K(+): T250, I252, and T255. T256 serves as a coordination point for Mg(2+). (6S)-5-formyl-5,6,7,8-tetrahydrofolate is bound at residue K459.

The protein belongs to the TRAFAC class TrmE-Era-EngA-EngB-Septin-like GTPase superfamily. TrmE GTPase family. Homodimer. Heterotetramer of two MnmE and two MnmG subunits. The cofactor is K(+).

Its subcellular location is the cytoplasm. Its function is as follows. Exhibits a very high intrinsic GTPase hydrolysis rate. Involved in the addition of a carboxymethylaminomethyl (cmnm) group at the wobble position (U34) of certain tRNAs, forming tRNA-cmnm(5)s(2)U34. The chain is tRNA modification GTPase MnmE from Oceanobacillus iheyensis (strain DSM 14371 / CIP 107618 / JCM 11309 / KCTC 3954 / HTE831).